The sequence spans 639 residues: Chaperone protein DnaK (639 aa).

Phosphothreonine; by autocatalysis is present on T198. Residues 603–618 (AKAQTQGGAQEGAAKQ) are compositionally biased toward low complexity. Residues 603–639 (AKAQTQGGAQEGAAKQSNATADDVVDAEFEEVKDDKK) are disordered. A compositionally biased stretch (acidic residues) spans 625–639 (DVVDAEFEEVKDDKK).

This sequence belongs to the heat shock protein 70 family.

Acts as a chaperone. In Shewanella sp. (strain MR-7), this protein is Chaperone protein DnaK.